A 342-amino-acid polypeptide reads, in one-letter code: Putative anthocyanidin reductase (342 aa).

NADP(+)-binding positions include arginine 44, lysine 51, 71 to 72 (EL), 91 to 93 (VAT), tyrosine 172, lysine 176, 199 to 202 (PVLV), and serine 214. Residue lysine 176 is the Proton donor of the active site.

Belongs to the NAD(P)-dependent epimerase/dehydratase family. Dihydroflavonol-4-reductase subfamily. In terms of tissue distribution, highly expressed in leaves and weakly in stems. Not expressed in roots.

It functions in the pathway secondary metabolite biosynthesis; flavonoid biosynthesis. The sequence is that of Putative anthocyanidin reductase from Ginkgo biloba (Ginkgo).